The sequence spans 162 residues: Beta-carotene hydroxylase (162 aa).

Residues 8–135 (VATVLVMELT…GRDHCVSFGF (128 aa)) enclose the Fatty acid hydroxylase domain.

This sequence belongs to the sterol desaturase family.

The catalysed reaction is all-trans-beta-carotene + 4 reduced [2Fe-2S]-[ferredoxin] + 2 O2 + 4 H(+) = all-trans-zeaxanthin + 4 oxidized [2Fe-2S]-[ferredoxin] + 2 H2O. It functions in the pathway carotenoid biosynthesis; astaxanthin biosynthesis. Catalyzes the hydroxylation reaction from beta-carotene to zeaxanthin via beta-cryptoxanthin. The sequence is that of Beta-carotene hydroxylase (crtZ) from Paracoccus sp. (strain PC1) (Alcaligenes sp. (strain PC1)).